The sequence spans 489 residues: Tripartite motif-containing protein 10 (489 aa).

An RING-type zinc finger spans residues 16–61 (CPVCQGTLREPVTIDCGHNFCRVCLTRYLEITSPDPEEPPTCPLCK). The B box-type zinc-finger motif lies at 94–135 (DEEDVCPEHGEKVYFFCEDDEMQLCVVCREAWEHRAHTVRFL). Cysteine 99, histidine 102, cysteine 121, and histidine 127 together coordinate Zn(2+). Positions 142–245 (YREQIQKCLE…IEELEEKKER (104 aa)) form a coiled coil. The B30.2/SPRY domain occupies 292–486 (REMKMFLEKL…FSLSSQEGAA (195 aa)).

It belongs to the TRIM/RBCC family. As to quaternary structure, interacts with IFNAR1; this interaction prevents association of IFNAR1 with TYK2.

It localises to the cytoplasm. E3 ligase that plays an essential role in the differentiation and survival of terminal erythroid cells. May directly bind to PTEN and promote its ubiquitination, resulting in its proteasomal degradation and activation of hypertrophic signaling. In addition, plays a role in immune response regulation by repressing the phosphorylation of STAT1 and STAT2 in the interferon/JAK/STAT signaling pathway independent of its E3 ligase activity. Mechanistically, interacts with the intracellular domain of IFNAR1 and thereby inhibits the association between TYK2 and IFNAR1. The sequence is that of Tripartite motif-containing protein 10 (TRIM10) from Bos taurus (Bovine).